The primary structure comprises 1037 residues: Ras guanine nucleotide exchange factor E (1037 aa).

A coiled-coil region spans residues 5 to 35 (ECNNRIEYLQNKVLELESLNENLKGQLEYFQ). Disordered stretches follow at residues 65-100 (NNNN…TTNN), 114-150 (TNSN…ELSN), 166-387 (TTTT…PLSN), 414-437 (TVNM…LYHS), 451-472 (SSLS…LTNP), 602-628 (INSN…NQLE), 907-935 (NTTT…QQLN), and 1004-1037 (EKET…SFKS). 2 stretches are compositionally biased toward low complexity: residues 114-145 (TNSN…NNSN) and 166-200 (TTTT…NNNN). Residues 229–239 (PTSSRNSPTNK) are compositionally biased toward polar residues. The span at 240 to 276 (SSPQFLSPLSKSPLSQSTQSTTVSSPSPSWTTTVPQS) shows a compositional bias: low complexity. Residues 282 to 300 (TIVQSKSPYSPDTNISNKL) are compositionally biased toward polar residues. Low complexity predominate over residues 318 to 360 (SPSKNSPRSLNSNNNNSSATTSITTPPTTSTPTPTTSTTTTTT). A compositionally biased stretch (basic and acidic residues) spans 361 to 370 (TERRPEDRRS). Polar residues-rich tracts occupy residues 372-387 (TSPF…PLSN) and 424-437 (PRSN…LYHS). The N-terminal Ras-GEF domain occupies 496 to 694 (NGFIVKGGTI…NLKRLLTNDR (199 aa)). The Ras-GEF domain occupies 726–1003 (DPTEIARQLT…YKLSLICEPK (278 aa)). Positions 907-930 (NTTTTTTTTTTTTTTNTTTSNNNN) are enriched in low complexity. Over residues 1027 to 1037 (SVTSLLNSFKS) the composition is skewed to polar residues.

Promotes the exchange of Ras-bound GDP by GTP. Seems to play a role in chemotaxis. This is Ras guanine nucleotide exchange factor E (gefE) from Dictyostelium discoideum (Social amoeba).